Consider the following 477-residue polypeptide: UDP-N-acetylmuramate--L-alanine ligase (477 aa).

112-118 (GAHGKTT) is an ATP binding site.

The protein belongs to the MurCDEF family.

Its subcellular location is the cytoplasm. It carries out the reaction UDP-N-acetyl-alpha-D-muramate + L-alanine + ATP = UDP-N-acetyl-alpha-D-muramoyl-L-alanine + ADP + phosphate + H(+). It participates in cell wall biogenesis; peptidoglycan biosynthesis. Cell wall formation. This Acidovorax ebreus (strain TPSY) (Diaphorobacter sp. (strain TPSY)) protein is UDP-N-acetylmuramate--L-alanine ligase.